The following is a 332-amino-acid chain: Phosphate acyltransferase (332 aa).

It belongs to the PlsX family. As to quaternary structure, homodimer. Probably interacts with PlsY.

It is found in the cytoplasm. The catalysed reaction is a fatty acyl-[ACP] + phosphate = an acyl phosphate + holo-[ACP]. The protein operates within lipid metabolism; phospholipid metabolism. Functionally, catalyzes the reversible formation of acyl-phosphate (acyl-PO(4)) from acyl-[acyl-carrier-protein] (acyl-ACP). This enzyme utilizes acyl-ACP as fatty acyl donor, but not acyl-CoA. The chain is Phosphate acyltransferase from Nitratiruptor sp. (strain SB155-2).